We begin with the raw amino-acid sequence, 471 residues long: 5-hydroxytryptamine receptor 2A (471 aa).

Topologically, residues 1–80 (MDILCEENTS…LQEKNWSALL (80 aa)) are extracellular. N-linked (GlcNAc...) asparagine glycosylation is present at N38. A helical membrane pass occupies residues 81–97 (TAVVIILTIAGNILVIM). Residues 98-111 (AVSLEKKLQNATNY) lie on the Cytoplasmic side of the membrane. A helical transmembrane segment spans residues 112–137 (FLMSLAIADMLLGFLVMPVSMLTILY). The Extracellular portion of the chain corresponds to 138–146 (GYRWPLPSK). The chain crosses the membrane as a helical span at residues 147 to 171 (LCAVWIYLDVLFSTASIMHLCAISL). The cysteines at positions 148 and 227 are disulfide-linked. A serotonin-binding site is contributed by D155. Residues 172–174 (DRY) carry the DRY motif; important for ligand-induced conformation changes motif. At 172-191 (DRYVAIQNPIHHSRFNSRTK) the chain is on the cytoplasmic side. A helical transmembrane segment spans residues 192 to 215 (AFLKIIAVWTISVGISMPIPVFGL). Residues 216–232 (QDDSKVFKEGSCLLADD) are Extracellular-facing. A helical membrane pass occupies residues 233–258 (NFVLIGSFVSFFIPLTIMVITYFLTI). The Cytoplasmic segment spans residues 259–322 (KSLQKEATLC…QSISNEQKAC (64 aa)). S280 carries the phosphoserine modification. The chain crosses the membrane as a helical span at residues 323-348 (KVLGIVFSLFVVMWCPFFITNIMAVI). Residue N343 participates in serotonin binding. A disulfide bond links C349 and C353. The Extracellular portion of the chain corresponds to 349 to 356 (CKESCNED). The helical transmembrane segment at 357-382 (VIGALLNVFVWIGYLSSAVNPLVYTL) threads the bilayer. Residues 376-380 (NPLVY) carry the NPxxY motif; important for ligand-induced conformation changes and signaling motif. Topologically, residues 383–471 (FNKTYRSAFS…DGVNEKVSCV (89 aa)) are cytoplasmic. The disordered stretch occupies residues 450 to 471 (KQHSEDASKDNSDGVNEKVSCV). A compositionally biased stretch (basic and acidic residues) spans 451 to 465 (QHSEDASKDNSDGVN). Residues 469–471 (SCV) carry the PDZ-binding motif.

It belongs to the G-protein coupled receptor 1 family. In terms of assembly, interacts (via C-terminus) with MPDZ and PATJ. May interact (via C-terminus) with MPP3, PRDX6, DLG4, DLG1, CASK, APBA1 and MAGI2. Interacts with GRM2 and DRD2; this may affect signaling.

It is found in the cell membrane. Its subcellular location is the cell projection. The protein localises to the dendrite. It localises to the axon. The protein resides in the cytoplasmic vesicle. It is found in the membrane. Its subcellular location is the caveola. The protein localises to the presynapse. G-protein coupled receptor activity is regulated by lipids: oleamide increases HTR2A-mediated activity. Functionally, G-protein coupled receptor for 5-hydroxytryptamine (serotonin). Also functions as a receptor for various drugs and psychoactive substances, including mescaline, psilocybin, 1-(2,5-dimethoxy-4-iodophenyl)-2-aminopropane (DOI) and lysergic acid diethylamide (LSD). Ligand binding causes a conformation change that triggers signaling via guanine nucleotide-binding proteins (G proteins) and modulates the activity of downstream effectors. HTR2A is coupled to G(q)/G(11) G alpha proteins and activates phospholipase C-beta, releasing diacylglycerol (DAG) and inositol 1,4,5-trisphosphate (IP3) second messengers that modulate the activity of phosphatidylinositol 3-kinase and promote the release of Ca(2+) ions from intracellular stores, respectively. Beta-arrestin family members inhibit signaling via G proteins and mediate activation of alternative signaling pathways. Affects neural activity, perception, cognition and mood. Plays a role in the regulation of behavior, including responses to anxiogenic situations and psychoactive substances. Plays a role in intestinal smooth muscle contraction, and may play a role in arterial vasoconstriction. The protein is 5-hydroxytryptamine receptor 2A (HTR2A) of Pongo pygmaeus (Bornean orangutan).